The chain runs to 450 residues: tRNA modification GTPase MnmE (450 aa).

Residues R25, E86, and R126 each contribute to the (6S)-5-formyl-5,6,7,8-tetrahydrofolate site. Positions 221–373 (GLRVALVGRP…LVQALLERCG (153 aa)) constitute a TrmE-type G domain. A K(+)-binding site is contributed by N231. GTP-binding positions include 231–236 (NVGKSS), 250–256 (TELPGTT), 275–278 (DTAG), and 336–339 (NKAD). Residue S235 participates in Mg(2+) binding. Positions 250, 252, and 255 each coordinate K(+). T256 is a Mg(2+) binding site. Residue K450 participates in (6S)-5-formyl-5,6,7,8-tetrahydrofolate binding.

The protein belongs to the TRAFAC class TrmE-Era-EngA-EngB-Septin-like GTPase superfamily. TrmE GTPase family. Homodimer. Heterotetramer of two MnmE and two MnmG subunits. K(+) is required as a cofactor.

It localises to the cytoplasm. In terms of biological role, exhibits a very high intrinsic GTPase hydrolysis rate. Involved in the addition of a carboxymethylaminomethyl (cmnm) group at the wobble position (U34) of certain tRNAs, forming tRNA-cmnm(5)s(2)U34. The chain is tRNA modification GTPase MnmE from Parasynechococcus marenigrum (strain WH8102).